Here is a 225-residue protein sequence, read N- to C-terminus: Receptor-transporting protein 2 (225 aa).

Residues 1 to 196 are Cytoplasmic-facing; sequence MCTSLTTCEW…RAQAGSGYNF (196 aa). Residues 52–161 form a 3CxxC-type zinc finger; it reads ASGRFHCSWC…AEFCEACQEG (110 aa). Residues 197-219 traverse the membrane as a helical segment; sequence LSLRWCLFWASLCLLVVYLQFSF. Residues 220–225 are Extracellular-facing; that stretch reads LSPAFF.

This sequence belongs to the TMEM7 family. In terms of assembly, interacts with olfactory receptors. In terms of tissue distribution, expressed in circumvallate papillae and testis.

Its subcellular location is the cell membrane. Its function is as follows. Specifically promotes functional cell surface expression of olfactory receptors, but not of other GPCRs. This Homo sapiens (Human) protein is Receptor-transporting protein 2 (RTP2).